Reading from the N-terminus, the 414-residue chain is MVKVEVLGMILAGGQGSRLYPLTAKRAKPAVPFGAKYRIIDFVLNNFVNSGIYAIYVLTQYKAQSLTEHIQRYWRFGAFLEDHFILLVPAQMYRYEELGPVWYRGTADAIYQNLHLVHNHAPKAVAVFGGDHIFKMNIRHMVEYHYDTRADITIAAYPVPVAEATRFGVLQVDEEWRITEFQEKPEEPKPIPGRPDMALASMGNYIFRTEALFELLEADARDETSAHDFGKGVIPRAIRVGYRVYAYDFHRNPIPGQEGPNLYWRDVGTLDAYYEASMDLVKVDPVFGLCSPVWPLRTANLFSPPAKFVHETGERVGRALNSLLAGGVIVSGGTVRESVLFRRVRVNSYSLVERSVLFDDVEVGRYCRIRNAIIDKNVKIPPHTEIGYDLELDRARGFTVTPEGVVVVPKGYRF.

Alpha-D-glucose 1-phosphate-binding positions include tyrosine 103, glycine 168, 183-184 (EK), and serine 201.

The protein belongs to the bacterial/plant glucose-1-phosphate adenylyltransferase family. In terms of assembly, homotetramer.

The catalysed reaction is alpha-D-glucose 1-phosphate + ATP + H(+) = ADP-alpha-D-glucose + diphosphate. The protein operates within glycan biosynthesis; glycogen biosynthesis. Involved in the biosynthesis of ADP-glucose, a building block required for the elongation reactions to produce glycogen. Catalyzes the reaction between ATP and alpha-D-glucose 1-phosphate (G1P) to produce pyrophosphate and ADP-Glc. The sequence is that of Glucose-1-phosphate adenylyltransferase from Thermus caldophilus.